Here is a 938-residue protein sequence, read N- to C-terminus: Isoleucine--tRNA ligase (938 aa).

The 'HIGH' region signature appears at 58 to 68; the sequence is PYANGSIHIGH. L-isoleucyl-5'-AMP is bound at residue Glu-561. Residues 602–606 carry the 'KMSKS' region motif; it reads KMSKS. Lys-605 is a binding site for ATP. Positions 901, 904, 921, and 924 each coordinate Zn(2+).

The protein belongs to the class-I aminoacyl-tRNA synthetase family. IleS type 1 subfamily. In terms of assembly, monomer. Requires Zn(2+) as cofactor.

Its subcellular location is the cytoplasm. It carries out the reaction tRNA(Ile) + L-isoleucine + ATP = L-isoleucyl-tRNA(Ile) + AMP + diphosphate. Catalyzes the attachment of isoleucine to tRNA(Ile). As IleRS can inadvertently accommodate and process structurally similar amino acids such as valine, to avoid such errors it has two additional distinct tRNA(Ile)-dependent editing activities. One activity is designated as 'pretransfer' editing and involves the hydrolysis of activated Val-AMP. The other activity is designated 'posttransfer' editing and involves deacylation of mischarged Val-tRNA(Ile). The protein is Isoleucine--tRNA ligase of Sodalis glossinidius (strain morsitans).